Reading from the N-terminus, the 465-residue chain is MTPATKLPQDVGPIHFVGIGGIGMSGIAEVLLNLGYRVQGSDLKGSKITERLAGLGAEIFEGQRAENLDGAAVVVISSAIKPGNPELDGARAQGLPVVRRADMLAELMRLKSNIAIAGTHGKTTTTTMMAELMVAGGFDPTVINGGIIHAYSSNARMGQGEWMVVEADESDGSFNRLPATVAIVTNIDPEHMEHWGSIEALRQGFYDFVSNIPFYGIAVCCTDHAEVQALVGRITDRRVRTYGFNAQADVRATNLTYKGGVAHFDILLQHEDMVIEGCTLPMPGDHNVSNALSAVAVARHLGMKADEIRAALAAFGGVNRRFTKVGEVNGVTIIDDYGHHPVEIAAVLKAARQASEGRVIAVHQPHRYSRLSNLFDDFCACFNEADVVAIAEVYAAGEAPIPGADRDALVAGLIRHGHRHARAILSEEDLERLVREQTRPGDMVVCLGAGTISAWANGLPDRLKG.

118 to 124 (GTHGKTT) is a binding site for ATP.

Belongs to the MurCDEF family.

Its subcellular location is the cytoplasm. The enzyme catalyses UDP-N-acetyl-alpha-D-muramate + L-alanine + ATP = UDP-N-acetyl-alpha-D-muramoyl-L-alanine + ADP + phosphate + H(+). It participates in cell wall biogenesis; peptidoglycan biosynthesis. In terms of biological role, cell wall formation. The protein is UDP-N-acetylmuramate--L-alanine ligase of Ruegeria pomeroyi (strain ATCC 700808 / DSM 15171 / DSS-3) (Silicibacter pomeroyi).